The sequence spans 126 residues: Fatty acid-binding protein, liver (126 aa).

An N-acetylalanine modification is found at alanine 2.

Belongs to the calycin superfamily. Fatty-acid binding protein (FABP) family.

The protein localises to the cytoplasm. Its function is as follows. Binds free fatty acids and their coenzyme A derivatives, bilirubin, and some other small molecules in the cytoplasm. May be involved in intracellular lipid transport. The sequence is that of Fatty acid-binding protein, liver (fabp1) from Schroederichthys bivius (Narrowmouthed catshark).